Here is a 307-residue protein sequence, read N- to C-terminus: MIDLIVLGAAAGGGFPQWNSNAPACRRARADDPAAPSRTQASIAVSGDGAHWFVVNASPDLRAQIGQTPALHPRHGLRSTPIAGVILTGGEVDTVTGLLTLRERQPFTLLATPPVLDLLDANPIFEALDRSIVPRVPLALDQPFALALPDGTPAGLTITPFAVPGKVPLYAESGPDPAAIVENGETIGLAMTDGVRHAYFIPGCARMTGPLRARLRGADLVFFDGTLWTDDEMLRAGVGQKTGQRMGHMSVSGDGGTIDAFADLDVRRKVLIHINNSNPLLLADSPERQVAHQAGWEVSFDGMRITT.

Belongs to the PqqB family.

Its pathway is cofactor biosynthesis; pyrroloquinoline quinone biosynthesis. In terms of biological role, may be involved in the transport of PQQ or its precursor to the periplasm. This Gluconacetobacter diazotrophicus (strain ATCC 49037 / DSM 5601 / CCUG 37298 / CIP 103539 / LMG 7603 / PAl5) protein is Coenzyme PQQ synthesis protein B.